The following is a 919-amino-acid chain: Alpha-amylase (919 aa).

Residues 1-33 (MPATRRTARVRRVAAVTVTALAAALLPPLAARA) form the signal peptide. Residues N182 and D281 each coordinate Ca(2+). D312 (nucleophile) is an active-site residue. H316 serves as a coordination point for Ca(2+). Catalysis depends on E346, which acts as the Proton donor. Positions 704–729 (ASGRLHHRHPARRGGAHRRLPGPRGR) are disordered. Positions 707 to 724 (RLHHRHPARRGGAHRRLP) are enriched in basic residues.

This sequence belongs to the glycosyl hydrolase 13 family. Monomer. Ca(2+) serves as cofactor.

It is found in the secreted. It catalyses the reaction Endohydrolysis of (1-&gt;4)-alpha-D-glucosidic linkages in polysaccharides containing three or more (1-&gt;4)-alpha-linked D-glucose units.. This is Alpha-amylase (amy) from Streptomyces lividans.